An 856-amino-acid polypeptide reads, in one-letter code: Serine/threonine-protein phosphatase 6 regulatory subunit 1 (856 aa).

The interaction with PPP6C stretch occupies residues 10-403 (SSHLDTLLEK…VFNNFLHAQV (394 aa)). Residue S232 is modified to Phosphoserine. Phosphothreonine is present on T524. S529, S530, and S531 each carry phosphoserine. The span at 621–630 (DDEEEEEEEG) shows a compositional bias: acidic residues. Disordered stretches follow at residues 621-770 (DDEE…KVAE) and 792-856 (RSAP…SGSQ). Residues S633 and S636 each carry the phosphoserine modification. Polar residues predominate over residues 644–656 (QGSQPVRASQASQ). Acidic residues predominate over residues 667 to 683 (DSEEEDEEEDEEEDEGA). Phosphoserine occurs at positions 698 and 739. Residues 794–809 (APSSLDSATRDPSTSV) are compositionally biased toward polar residues. S826 bears the Phosphoserine mark. The span at 842–856 (PNGSTPGGPISSGSQ) shows a compositional bias: low complexity.

The protein belongs to the SAPS family. As to quaternary structure, protein phosphatase 6 (PP6) holoenzyme is proposed to be a heterotrimeric complex formed of the catalytic subunit, a SAPS domain-containing subunit (PP6R) and an ankyrin repeat-domain containing regulatory subunit (ARS). Interacts with PPP6C and NFKBIE. Interacts with ANKRD28, ANKRD44 and ANKRD52. As to expression, ubiquitous with highest expression in lung, spleen and bladder.

The protein localises to the cytoplasm. In terms of biological role, regulatory subunit of protein phosphatase 6 (PP6). May function as a scaffolding PP6 subunit. Involved in the PP6-mediated dephosphorylation of NFKBIE opposing its degradation in response to TNF-alpha. This is Serine/threonine-protein phosphatase 6 regulatory subunit 1 (Ppp6r1) from Mus musculus (Mouse).